The following is a 426-amino-acid chain: Glutamate-1-semialdehyde 2,1-aminomutase (426 aa).

Lys-265 carries the post-translational modification N6-(pyridoxal phosphate)lysine.

The protein belongs to the class-III pyridoxal-phosphate-dependent aminotransferase family. HemL subfamily. As to quaternary structure, homodimer. Requires pyridoxal 5'-phosphate as cofactor.

It localises to the cytoplasm. The enzyme catalyses (S)-4-amino-5-oxopentanoate = 5-aminolevulinate. It participates in porphyrin-containing compound metabolism; protoporphyrin-IX biosynthesis; 5-aminolevulinate from L-glutamyl-tRNA(Glu): step 2/2. The chain is Glutamate-1-semialdehyde 2,1-aminomutase from Aliarcobacter butzleri (strain RM4018) (Arcobacter butzleri).